A 545-amino-acid polypeptide reads, in one-letter code: Adenine deaminase (545 aa).

It belongs to the metallo-dependent hydrolases superfamily. Adenine deaminase family. Mn(2+) is required as a cofactor.

It carries out the reaction adenine + H2O + H(+) = hypoxanthine + NH4(+). The sequence is that of Adenine deaminase from Parabacteroides distasonis (strain ATCC 8503 / DSM 20701 / CIP 104284 / JCM 5825 / NCTC 11152).